Consider the following 100-residue polypeptide: Small ribosomal subunit protein uS14m (100 aa).

Belongs to the universal ribosomal protein uS14 family.

The protein localises to the mitochondrion. The sequence is that of Small ribosomal subunit protein uS14m (RPS14) from Brassica napus (Rape).